A 702-amino-acid chain; its full sequence is Polyribonucleotide nucleotidyltransferase (702 aa).

2 residues coordinate Mg(2+): aspartate 485 and aspartate 491. One can recognise a KH domain in the interval 552-612 (PRTEIICIDP…EGVKKAISII (61 aa)). The region spanning 622–690 (GEIYLGKVTK…NQGRINLSRK (69 aa)) is the S1 motif domain.

Belongs to the polyribonucleotide nucleotidyltransferase family. The cofactor is Mg(2+).

It localises to the cytoplasm. The enzyme catalyses RNA(n+1) + phosphate = RNA(n) + a ribonucleoside 5'-diphosphate. Involved in mRNA degradation. Catalyzes the phosphorolysis of single-stranded polyribonucleotides processively in the 3'- to 5'-direction. The chain is Polyribonucleotide nucleotidyltransferase from Clostridium botulinum (strain 657 / Type Ba4).